The primary structure comprises 267 residues: MLSAMDVMIHSSSFLLPCDETCGTRYALVVLNQNLPRFTPLLWEHAKLRLCADGGANRIYDELPLFFPHEDPFVIRNRYKPDVIKGDMDSIRRDVLDFYVYWGTKVIDESHDQDTTDLDKCISYIRHSTLNQESSRLQILATGALGGRFDHEAGNLNVLYRYPDTRIVLLSDDCLIQLLPKTHRHEIHIHSSLQGPHCGLIPIGTPSANTTTSGLKWDLSNTEMRFGGLISTSNLVKEEIITVESDSDLLWTISIKKTGLPVQDHKP.

The protein belongs to the thiamine pyrophosphokinase family. Expressed in leaves and at lower levels in flowers.

It is found in the cytoplasm. It localises to the cytosol. It carries out the reaction thiamine + ATP = thiamine diphosphate + AMP + H(+). Its pathway is cofactor biosynthesis; thiamine diphosphate biosynthesis; thiamine diphosphate from thiamine: step 1/1. In terms of biological role, catalyzes the phosphorylation of thiamine to thiamine pyrophosphate (TPP). TPP is an active cofactor for enzymes involved in glycolysis and energy production. Plant leaves require high levels of TPP for photosynthesis and carbohydrate metabolism. The polypeptide is Thiamine pyrophosphokinase 2 (Arabidopsis thaliana (Mouse-ear cress)).